Reading from the N-terminus, the 220-residue chain is Vesicle-associated membrane protein 7 (220 aa).

The Cytoplasmic segment spans residues 2–188; sequence AILFAVVARG…ARAMCMKNLK (187 aa). A Longin domain is found at 7–110; it reads VVARGTTILA…AMNSEFSSVL (104 aa). Positions 125 to 185 constitute a v-SNARE coiled-coil homology domain; that stretch reads QVAETQAQVD…RNLARAMCMK (61 aa). The helical; Anchor for type IV membrane protein transmembrane segment at 189 to 209 threads the bilayer; it reads LTIIIIIVSIVIIYIIVSAAC. Residues 210 to 220 lie on the Vesicular side of the membrane; the sequence is GGLAWPSCVQK.

The protein belongs to the synaptobrevin family.

It is found in the cytoplasmic vesicle. Its subcellular location is the secretory vesicle membrane. The protein localises to the golgi apparatus. The protein resides in the trans-Golgi network membrane. It localises to the late endosome membrane. It is found in the lysosome membrane. Its subcellular location is the endoplasmic reticulum membrane. The protein localises to the phagosome membrane. The protein resides in the synapse. It localises to the synaptosome. Involved in the targeting and/or fusion of transport vesicles to their target membrane during transport of proteins from the early endosome to the lysosome. Required for heterotypic fusion of late endosomes with lysosomes and homotypic lysosomal fusion. Required for calcium regulated lysosomal exocytosis. Involved in the export of chylomicrons from the endoplasmic reticulum to the cis Golgi. Required for focal exocytosis of late endocytic vesicles during phagosome formation. The chain is Vesicle-associated membrane protein 7 from Gallus gallus (Chicken).